The following is a 563-amino-acid chain: Calmodulin-binding protein 60 G (563 aa).

Positions 1–76 are calmodulin-binding; that stretch reads MKIRNSPSFH…SSCVSMERSR (76 aa). Residues 147-263 form a DNA-binding region; it reads ESWTVEGFNR…VSATRLAERK (117 aa).

The protein belongs to the plant ACBP60 protein family. In terms of assembly, interacts with calmodulin (CaM) in the presence of calcium ions; this interaction is required for defense responses. As to quaternary structure, (Microbial infection) Interacts with V.dahliae SCP41; the interaction is direct and inhibits CBP60G. As to expression, expressed in seedlings, roots, leaves, inflorescences and flowers, and, to a lower extent, in siliques. Particularly present in guard cells.

The protein localises to the nucleus. In terms of biological role, transcription activator that binds DNA in a sequence-specific manner, 5'-GAAATTTTGG-3', to promote the expression of target genes. Recruited to the promoter of ICS1 and other defense-related genes (e.g. PR1, PR2 and EDS5) in response to both biotic (e.g. Pseudomonas syringae pv. maculicola ES4326, P.syringae pv. tomato DC3000, and microbe-associated molecular patterns (MAMPs) such as flg22) and abiotic stresses (e.g. UV-B, drought and abscisic acid), thus triggering rapid defense responses by stimulating salicylic acid (SA) biosynthesis. Involved in basal and systemic acquired resistance to P.syringae and Hyaloperonospora arabidopsidis. Mediates resistance to drought and sensitivity to abscisic acid (ABA), especially for ABA-mediated signaling process that regulates early seedling growth. This Arabidopsis thaliana (Mouse-ear cress) protein is Calmodulin-binding protein 60 G.